The sequence spans 569 residues: Urease subunit alpha (569 aa).

In terms of domain architecture, Urease spans 131 to 569; the sequence is GGIDTHIHFI…LPLAQRYLLL (439 aa). Residues His136, His138, and Lys219 each contribute to the Ni(2+) site. N6-carboxylysine is present on Lys219. His221 provides a ligand contact to substrate. Ni(2+)-binding residues include His248 and His274. His322 functions as the Proton donor in the catalytic mechanism. Asp362 serves as a coordination point for Ni(2+).

This sequence belongs to the metallo-dependent hydrolases superfamily. Urease alpha subunit family. In terms of assembly, heterotrimer of UreA (gamma), UreB (beta) and UreC (alpha) subunits. Three heterotrimers associate to form the active enzyme. It depends on Ni cation as a cofactor. Post-translationally, carboxylation allows a single lysine to coordinate two nickel ions.

It localises to the cytoplasm. It catalyses the reaction urea + 2 H2O + H(+) = hydrogencarbonate + 2 NH4(+). Its pathway is nitrogen metabolism; urea degradation; CO(2) and NH(3) from urea (urease route): step 1/1. The protein is Urease subunit alpha of Synechococcus sp. (strain WH7805).